The sequence spans 811 residues: Hypoxia-inducible factor 1-alpha (811 aa).

The segment at 1–27 (MDSPGGVTDKKRISSERRKEKSRDAAR) is disordered. A compositionally biased stretch (basic and acidic residues) spans 8 to 27 (TDKKRISSERRKEKSRDAAR). Positions 17 to 70 (RRKEKSRDAARCRRSKESEVFYELAHQLPLPHTVSAHLDKASIMRLTISYLRMR) constitute a bHLH domain. PAS domains follow at residues 80 to 157 (TEAN…PVKK) and 228 to 298 (PHPS…FTKG). Positions 302-345 (TGQYRMLAKQGGYVWVETQATVIYNTKNSQPQCIVCVNYVLSGI) constitute a PAC domain. The tract at residues 401 to 587 (APAAGDTIIS…LSPLESSSSG (187 aa)) is ODD. P402 is modified (4-hydroxyproline). The disordered stretch occupies residues 490–518 (PQVQEQPTSPSDASTSQSSPEPSSPNDYC). Over residues 496–514 (PTSPSDASTSQSSPEPSSP) the composition is skewed to low complexity. The NTAD stretch occupies residues 529-573 (FKLELVEKLFAIDTEAKNPFSTQETDLDLEMLAPYIPMDDDFQLR). P562 is subject to 4-hydroxyproline. The tract at residues 576–785 (DQLSPLESSS…GLPQLTSYDC (210 aa)) is ID. A compositionally biased stretch (polar residues) spans 634-652 (NDTSSAPASPYSGNRSRTA). Residues 634–655 (NDTSSAPASPYSGNRSRTASPI) are disordered. Short sequence motifs (nuclear localization signal) lie at residues 703 to 706 (RKRK) and 718 to 721 (GIGS). The segment at 771–811 (SMDESGLPQLTSYDCEVNAPIQGNRNLLQGEELLRALDQVN) is CTAD. N788 carries the (3S)-3-hydroxyasparagine modification.

As to quaternary structure, efficient DNA binding requires heterodimerization of an alpha and a beta/ARNT subunit. In normoxia, is hydroxylated on Pro-402 and Pro-562. The hydroxylated prolines promote interaction with VHL, initiating rapid ubiquitination and subsequent proteasomal degradation. Under hypoxia, proline hydroxylation is impaired and ubiquitination is attenuated, resulting in stabilization. Post-translationally, in normoxia, is hydroxylated on Asn-788, thus abrogating interaction with CREBBP and EP300 and preventing transcriptional activation. In terms of processing, the iron and 2-oxoglutarate dependent 3-hydroxylation of asparagine is (S) stereospecific within HIF CTAD domains.

The protein resides in the cytoplasm. It is found in the nucleus. It localises to the nucleus speckle. Induced by reactive oxygen species (ROS). In terms of biological role, functions as a master transcriptional regulator of the adaptive response to hypoxia. Under hypoxic conditions, activates the transcription of over 40 genes, including erythropoietin, glucose transporters, glycolytic enzymes, vascular endothelial growth factor, HILPDA, and other genes whose protein products increase oxygen delivery or facilitate metabolic adaptation to hypoxia. Plays an essential role in embryonic vascularization, tumor angiogenesis and pathophysiology of ischemic disease. The polypeptide is Hypoxia-inducible factor 1-alpha (HIF1A) (Gallus gallus (Chicken)).